Here is a 349-residue protein sequence, read N- to C-terminus: Autophagy-related protein 3 (349 aa).

Positions 95-173 (ALVNDGDDFK…IRDSGADSKN (79 aa)) are flexible region. The Glycyl thioester intermediate role is filled by C244. The segment at 248–325 (SVMKTLLDRA…DQEVAIRVDQ (78 aa)) is handle region. The ATG8 interaction motif (AIM) signature appears at 306–309 (WEEV).

This sequence belongs to the ATG3 family. Monomer. Interacts with ATG8 through an intermediate thioester bond between Cys-244 and the C-terminal Gly of ATG8. Interacts with the C-terminal region of the E1-like ATG7 enzyme. Also interacts with the ATG12-ATG5 conjugate.

The protein localises to the cytoplasm. E2 conjugating enzyme required for the cytoplasm to vacuole transport (Cvt) and autophagy. Required for selective autophagic degradation of the nucleus (nucleophagy) as well as for mitophagy which contributes to regulate mitochondrial quantity and quality by eliminating the mitochondria to a basal level to fulfill cellular energy requirements and preventing excess ROS production. Responsible for the E2-like covalent binding of phosphatidylethanolamine to the C-terminal Gly of ATG8. The ATG12-ATG5 conjugate plays a role of an E3 and promotes the transfer of ATG8 from ATG3 to phosphatidylethanolamine (PE). This step is required for the membrane association of ATG8. The formation of the ATG8-phosphatidylethanolamine conjugate is essential for autophagy and for the cytoplasm to vacuole transport (Cvt). The ATG8-PE conjugate mediates tethering between adjacent membranes and stimulates membrane hemifusion, leading to expansion of the autophagosomal membrane during autophagy. Autophagy is required for proper vegetative growth, asexual/sexual reproduction, and full virulence. Autophagy is particularly involved in the biosynthesis of deoxynivalenol (DON), an important virulence determinant. This Gibberella zeae (strain ATCC MYA-4620 / CBS 123657 / FGSC 9075 / NRRL 31084 / PH-1) (Wheat head blight fungus) protein is Autophagy-related protein 3.